Here is a 60-residue protein sequence, read N- to C-terminus: Cytotoxin 5 (60 aa).

4 cysteine pairs are disulfide-bonded: cysteine 3-cysteine 21, cysteine 14-cysteine 38, cysteine 42-cysteine 53, and cysteine 54-cysteine 59.

Belongs to the three-finger toxin family. Short-chain subfamily. Type IA cytotoxin sub-subfamily. In terms of assembly, monomer in solution; Homodimer and oligomer in the presence of negatively charged lipids forming a pore with a size ranging between 20 and 30 Angstroms. In terms of tissue distribution, expressed by the venom gland.

The protein resides in the secreted. It is found in the target cell membrane. Its function is as follows. Shows cytolytic activity on many different cells by forming pore in lipid membranes. In vivo, increases heart rate or kills the animal by cardiac arrest. In addition, it binds to heparin with high affinity, interacts with Kv channel-interacting protein 1 (KCNIP1) in a calcium-independent manner, and binds to integrin alpha-V/beta-3 (ITGAV/ITGB3) with moderate affinity. In Naja haje haje (Egyptian cobra), this protein is Cytotoxin 5.